We begin with the raw amino-acid sequence, 154 residues long: MKLRDSLAENKSIRLQAEAETWQEAVKIGVDLLVAADVVEPRYYQAILDGVEQFGPYFVIAPGLAMPHGRPEEGVKKTGFSLVTLKKPLEFNHDDNDPVDILITMAAVDANTHQEVGIMQIVNLFEDEENFDRLRACRTEQEVLDLIDRTNAAA.

Positions 6–150 (SLAENKSIRL…QEVLDLIDRT (145 aa)) constitute a PTS EIIA type-2 domain. His-68 serves as the catalytic Tele-phosphohistidine intermediate. His-68 is modified (phosphohistidine).

The protein localises to the cytoplasm. Functionally, the phosphoenolpyruvate-dependent sugar phosphotransferase system (sugar PTS), a major carbohydrate active transport system, catalyzes the phosphorylation of incoming sugar substrates concomitantly with their translocation across the cell membrane. The enzyme II UlaABC PTS system is involved in ascorbate transport. In Escherichia coli O157:H7, this protein is Ascorbate-specific PTS system EIIA component (ulaC).